The primary structure comprises 158 residues: pH 6 antigen (158 aa).

An N-terminal signal peptide occupies residues 1-26 (MKMKCFAKNALAVTTLMIAACGMANA).

As to quaternary structure, forms a homomer composed of subunits assembled in a large structure.

It is found in the fimbrium. Its function is as follows. Fibrillar structure, part of fimbriae, necessary for full virulence. This Yersinia pestis protein is pH 6 antigen (psaA).